The following is a 1375-amino-acid chain: Ubiquitin carboxyl-terminal hydrolase 47 (1375 aa).

An N6-acetyllysine modification is found at Lys-122. Residues 188 to 564 (VGLVNQAMTC…NAYMLIYRLK (377 aa)) enclose the USP domain. Cys-197 acts as the Nucleophile in catalysis. The disordered stretch occupies residues 425-452 (DEKSPQTESCTDSGAENEGSCHSDQMSN). A compositionally biased stretch (polar residues) spans 430-452 (QTESCTDSGAENEGSCHSDQMSN). The Proton acceptor role is filled by His-503. Position 832 is a phosphoserine (Ser-832). Disordered stretches follow at residues 840–859 (TAYQKAGGDSGNVDDDCERV), 880–968 (LKSL…SHSS), and 983–1024 (NGLD…ESGK). Residues 882–899 (SLSLQQQQDGDNGDSSKS) are compositionally biased toward low complexity. Ser-910 bears the Phosphoserine mark. Basic and acidic residues predominate over residues 912–928 (LNERDSSASVDNRELEQ). Polar residues predominate over residues 929–938 (HIQTSDPENF). A Phosphoserine modification is found at Ser-933. Positions 940–950 (SEERSDSDVNN) are enriched in basic and acidic residues. The span at 953–968 (STSSVDSDILSSSHSS) shows a compositional bias: low complexity. Positions 997–1006 (KANEGKKETW) are enriched in basic and acidic residues. Acidic residues predominate over residues 1007-1020 (DTAEEDSGTDSEYD). Ser-1013 bears the Phosphoserine mark. Phosphothreonine is present on Thr-1015. At Ser-1017 the chain carries Phosphoserine.

It belongs to the peptidase C19 family. As to quaternary structure, interacts with BTRC and FBXW11. Interacts with POLB. Expressed in skeletal muscle, heart and testis.

It is found in the cytoplasm. The enzyme catalyses Thiol-dependent hydrolysis of ester, thioester, amide, peptide and isopeptide bonds formed by the C-terminal Gly of ubiquitin (a 76-residue protein attached to proteins as an intracellular targeting signal).. In terms of biological role, ubiquitin-specific protease that specifically deubiquitinates monoubiquitinated DNA polymerase beta (POLB), stabilizing POLB thereby playing a role in base-excision repair (BER). Acts as a regulator of cell growth and genome integrity. May also indirectly regulate CDC25A expression at a transcriptional level. The polypeptide is Ubiquitin carboxyl-terminal hydrolase 47 (USP47) (Homo sapiens (Human)).